Here is a 207-residue protein sequence, read N- to C-terminus: Ribosomal RNA small subunit methyltransferase G (207 aa).

S-adenosyl-L-methionine contacts are provided by residues G73, L78, 124-125 (VE), and R139.

It belongs to the methyltransferase superfamily. RNA methyltransferase RsmG family.

The protein resides in the cytoplasm. It carries out the reaction guanosine(527) in 16S rRNA + S-adenosyl-L-methionine = N(7)-methylguanosine(527) in 16S rRNA + S-adenosyl-L-homocysteine. In terms of biological role, specifically methylates the N7 position of guanine in position 527 of 16S rRNA. This chain is Ribosomal RNA small subunit methyltransferase G, found in Salmonella agona (strain SL483).